The chain runs to 704 residues: MALKFAPFASEIELPFYTALSQLKIDHDKLDDSARPVLGLYEPRATQSPDQSSRMRVLGNALSSNEVPSGHIRAEGKIKNVNTIEDFKNMDKQAMLQTSAKQGQIWDAINDGTIYSIPSLLSSFTILSFANLKKYTFTYWFAFPALHSEPAWRKVEQPPKFSAEETTALTEELGTWRYSHDNREHGFFLAKRVYPSSEHPQDPESESTSDLPFKWVIGSLREFESGFFNGVDAKNQYVSFVDPSTYHENPGWMLRNLLVLVRRRYKLDKVQILCYRDNHAKRHVPQSLILILESIYDPEYQSTAPDQIPKVTGWERNSLGKLTAKVTNLAQYMDPAQLADQAVDLNLKLMKWRIAPELNLDAIKNTKCLLLGAGTLGTYVSRLLMGWGVRKITFVDNASVSFSNPVRQPLFDFKDCIDGGAKKAYRASEALQEIYPGVDSTGHVMAVPMLGHPITDEAATKMNFELLQKLIEDHDAIFLLMDTRESRWLPTVMGKAAGKIVMNAALGFDTYVVMRHGVTPEDGGPAALGCYFCNDVVAPSDLLQSVKDQTLDQQCTVTRPGVAPEASSKLVELLASVLQHPLKGAAPAPKLSSNHQSGQLEFDRDPPNHPLGLVPHQIRGFLAAYKTMLISGPSYDCCSACSPKIVNAYKEDGWEFIKRALTEKDYITELSGLAEVQRKAEAAANDVEWDSDEEGMEDEEPELL.

The GXGXXG motif signature appears at 372-377; sequence GAGTLG. Cys-555 functions as the Glycyl thioester intermediate in the catalytic mechanism. A homodimerization region spans residues 660-699; sequence ALTEKDYITELSGLAEVQRKAEAAANDVEWDSDEEGMEDE. A disordered region spans residues 682–704; that stretch reads AAANDVEWDSDEEGMEDEEPELL. A compositionally biased stretch (acidic residues) spans 687-704; sequence VEWDSDEEGMEDEEPELL.

This sequence belongs to the ATG7 family. In terms of assembly, homodimer. Interacts with ATG8 through a thioester bond between Cys-555 and the C-terminal Gly of ATG8 and with ATG12 through a thioester bond between Cys-555 and the C-terminal Gly of ATG12. Also interacts with ATG3.

The protein localises to the cytoplasm. The protein resides in the preautophagosomal structure. E1-like activating enzyme involved in the 2 ubiquitin-like systems required for cytoplasm to vacuole transport (Cvt) and autophagy. Activates ATG12 for its conjugation with ATG5 and ATG8 for its conjugation with phosphatidylethanolamine. Both systems are needed for the ATG8 association to Cvt vesicles and autophagosomes membranes. Autophagy is essential for maintenance of amino acid levels and protein synthesis under nitrogen starvation. Required for selective autophagic degradation of the nucleus (nucleophagy) as well as for mitophagy which contributes to regulate mitochondrial quantity and quality by eliminating the mitochondria to a basal level to fulfill cellular energy requirements and preventing excess ROS production. Required for normal mycelial growth and conidiogenesis, and regulates sclerotial formation. Plays an essential role in pathogenesis. This Botryotinia fuckeliana (strain T4) (Noble rot fungus) protein is Ubiquitin-like modifier-activating enzyme atg7.